The chain runs to 155 residues: Large ribosomal subunit protein uL16m (155 aa).

This sequence belongs to the universal ribosomal protein uL16 family.

Its subcellular location is the mitochondrion. This Petunia hybrida (Petunia) protein is Large ribosomal subunit protein uL16m (RPL16).